Reading from the N-terminus, the 488-residue chain is Catalase (488 aa).

The disordered stretch occupies residues Met1–Ala24. The span at Leu7–Thr23 shows a compositional bias: polar residues. Residues His55 and Asn128 contribute to the active site. Residue Tyr338 participates in heme binding.

Belongs to the catalase family. It depends on heme as a cofactor.

Its subcellular location is the cytoplasm. The enzyme catalyses 2 H2O2 = O2 + 2 H2O. Functionally, decomposes hydrogen peroxide into water and oxygen; serves to protect cells from the toxic effects of hydrogen peroxide. The protein is Catalase (kat) of Listeria innocua serovar 6a (strain ATCC BAA-680 / CLIP 11262).